The primary structure comprises 644 residues: Exoribonuclease 2 (644 aa).

In terms of domain architecture, RNB spans Arg189 to Lys516. The 83-residue stretch at Asn561 to Ala643 folds into the S1 motif domain.

It belongs to the RNR ribonuclease family. RNase II subfamily.

It is found in the cytoplasm. It carries out the reaction Exonucleolytic cleavage in the 3'- to 5'-direction to yield nucleoside 5'-phosphates.. Involved in mRNA degradation. Hydrolyzes single-stranded polyribonucleotides processively in the 3' to 5' direction. The polypeptide is Exoribonuclease 2 (Salmonella agona (strain SL483)).